The sequence spans 392 residues: GTPase Obg (392 aa).

The 159-residue stretch at M1–L159 folds into the Obg domain. Residues A160 to E333 enclose the OBG-type G domain. Residues G166–S173, F191–V195, D213–G216, N283–D286, and S314–A316 contribute to the GTP site. 2 residues coordinate Mg(2+): S173 and T193. A disordered region spans residues S361–P392. Positions F365 to V386 are enriched in acidic residues.

This sequence belongs to the TRAFAC class OBG-HflX-like GTPase superfamily. OBG GTPase family. As to quaternary structure, monomer. The cofactor is Mg(2+).

Its subcellular location is the cytoplasm. Its function is as follows. An essential GTPase which binds GTP, GDP and possibly (p)ppGpp with moderate affinity, with high nucleotide exchange rates and a fairly low GTP hydrolysis rate. Plays a role in control of the cell cycle, stress response, ribosome biogenesis and in those bacteria that undergo differentiation, in morphogenesis control. The protein is GTPase Obg of Histophilus somni (strain 2336) (Haemophilus somnus).